Consider the following 685-residue polypeptide: Probable transcriptional regulator SLK3 (685 aa).

2 disordered regions span residues 25–66 (NLPG…ENSY) and 108–129 (LQQQ…SQRL). Positions 39-56 (QHLPQQQQRQLLEQQAGQ) are enriched in low complexity. Residues 176–423 (PAENCITYWR…EHKVGPLEGL (248 aa)) are dimerization. Residues 185–199 (RKFVAEYFSPRAKQR) carry the Nuclear localization signal motif. A compositionally biased stretch (polar residues) spans 447-459 (GNSGAMSGPAQAQ). Disordered stretches follow at residues 447–491 (GNSG…MNGS), 512–591 (NNQN…NTQE), and 611–658 (QQQA…NNLP). Over residues 460–471 (MTLSSGTMSGST) the composition is skewed to low complexity. The span at 512 to 524 (NNQNSNTGNQEGF) shows a compositional bias: polar residues. A compositionally biased stretch (low complexity) spans 525–543 (SSQNPTLNSNQSPSSSSQQ). 3 stretches are compositionally biased toward polar residues: residues 544 to 588 (RENL…SHGN), 611 to 636 (QQQA…TSNI), and 645 to 658 (RINS…NNLP).

This sequence belongs to the adn1/SEU family.

Its subcellular location is the nucleus. Its function is as follows. Probable transcription regulator that functions in the development of the carpel margin meristem similarly to SEUSS (SEU). In association with SEU, supports organ development from meristematic regions by facilitating auxin response and thus organ initiation, and by sustaining meristematic potential through the maintenance of PHABULOSA expression. In Arabidopsis thaliana (Mouse-ear cress), this protein is Probable transcriptional regulator SLK3 (SLK3).